Here is a 152-residue protein sequence, read N- to C-terminus: MMKKIDVKILDPRVGQQFPLPTYATSGSAGLDLRACLDDAVELAPGATTLVPTGLAIHIADPSLAAVMLPRSGLGHKHGIVLGNLVGLIDSDYQGQLMVSIWNRGQDSFTIEPGERIAQMVFVPVVQAEFNLVEEFEATDRGEGGFGHSGRK.

Substrate contacts are provided by residues Arg71–Gly73, Asn84, Leu88–Asp90, and Met98.

Belongs to the dUTPase family. Mg(2+) serves as cofactor.

It carries out the reaction dUTP + H2O = dUMP + diphosphate + H(+). The protein operates within pyrimidine metabolism; dUMP biosynthesis; dUMP from dCTP (dUTP route): step 2/2. Its function is as follows. This enzyme is involved in nucleotide metabolism: it produces dUMP, the immediate precursor of thymidine nucleotides and it decreases the intracellular concentration of dUTP so that uracil cannot be incorporated into DNA. The polypeptide is Deoxyuridine 5'-triphosphate nucleotidohydrolase (Citrobacter koseri (strain ATCC BAA-895 / CDC 4225-83 / SGSC4696)).